The sequence spans 1934 residues: Tudor domain-containing protein 15 (1934 aa).

Tudor domains are found at residues 59–117 (NVEI…LFEL), 289–347 (CDNF…FILV), 531–589 (KPEP…FCEL), 799–856 (PYEI…FLLL), 1011–1070 (DSNK…FPEL), and 1342–1401 (KPLV…FLTV). The tract at residues 1490–1510 (VRPGDNEMKKGKSNESEGSMN) is disordered. A compositionally biased stretch (basic and acidic residues) spans 1491 to 1504 (RPGDNEMKKGKSNE). 2 consecutive Tudor domains span residues 1574-1633 (SIEK…IRNI) and 1780-1838 (FIIP…PEEL).

The chain is Tudor domain-containing protein 15 (TDRD15) from Homo sapiens (Human).